Reading from the N-terminus, the 174-residue chain is Shikimate kinase 2 (174 aa).

Residue 12–17 (GCGKTT) participates in ATP binding. Mg(2+) is bound by residues Thr16 and Asp32. Residues Asp34, Arg58, and Gly79 each contribute to the substrate site. The LID domain stretch occupies residues 112 to 126 (QAAPEEDLRPTLTGK). An ATP-binding site is contributed by Arg120. Arg139 provides a ligand contact to substrate.

The protein belongs to the shikimate kinase family. AroL subfamily. As to quaternary structure, monomer. It depends on Mg(2+) as a cofactor.

It is found in the cytoplasm. It carries out the reaction shikimate + ATP = 3-phosphoshikimate + ADP + H(+). It participates in metabolic intermediate biosynthesis; chorismate biosynthesis; chorismate from D-erythrose 4-phosphate and phosphoenolpyruvate: step 5/7. In terms of biological role, catalyzes the specific phosphorylation of the 3-hydroxyl group of shikimic acid using ATP as a cosubstrate. The chain is Shikimate kinase 2 from Escherichia coli O1:K1 / APEC.